The following is a 149-amino-acid chain: MRPFGEAKFLSGHQTLQLMRKKALWSKGKRVRCHTPCLPKVPRGRARRSGATTREQSPHRQGDRRRPSQGTSRPTGKTGETREGNPIGSQRIHSTCSPTDFIFLILESGGKGSLFCNEKKKRSRFDSAQPNDTSNTNDLCLECVARSLF.

Residues 34–94 are disordered; the sequence is HTPCLPKVPR…NPIGSQRIHS (61 aa). Basic and acidic residues predominate over residues 56–66; the sequence is QSPHRQGDRRR.

The protein resides in the mitochondrion. This is an uncharacterized protein from Arabidopsis thaliana (Mouse-ear cress).